A 570-amino-acid chain; its full sequence is Molecular chaperone MKKS (570 aa).

192–199 (GHIILGKS) is a binding site for ATP. The substrate-binding apical domain stretch occupies residues 198–370 (KSLIVPLKGQ…FHLIPNEATI (173 aa)).

It belongs to the TCP-1 chaperonin family. Component of a complex composed at least of MKKS, BBS10, BBS12, TCP1, CCT2, CCT3, CCT4, CCT5 and CCT8. Interacts with STUB1. Interacts with BBS2 (via coiled coil domain). Interacts with CCDC28B. Interacts with BBS12. Interacts with SMARCC1, a component of the SWI/SNF complexes; the interaction takes place predominantly in the cytoplasm and may modulate SMARCC1 location. Interacts with DLEC1.

Its subcellular location is the cytoplasm. It is found in the cytoskeleton. The protein resides in the microtubule organizing center. The protein localises to the centrosome. It localises to the cytosol. Its subcellular location is the nucleus. Probable molecular chaperone that assists the folding of proteins upon ATP hydrolysis. Plays a role in the assembly of BBSome, a complex involved in ciliogenesis regulating transports vesicles to the cilia. May play a role in protein processing in limb, cardiac and reproductive system development. May play a role in cytokinesis. This is Molecular chaperone MKKS (MKKS) from Pongo abelii (Sumatran orangutan).